Reading from the N-terminus, the 109-residue chain is MPFLRIKIYSTDLEELNRVVEKIKEIVKQTGVKMRGPIPLPTKILRVPVLRITGHRGTKIWDTYQMRIHRRIIDIATDDRTIKLLMRTPLITKPEKIQIQLKYIKDKNL.

The protein belongs to the universal ribosomal protein uS10 family. In terms of assembly, part of the 30S ribosomal subunit.

Functionally, involved in the binding of tRNA to the ribosomes. This chain is Small ribosomal subunit protein uS10, found in Nanoarchaeum equitans (strain Kin4-M).